The sequence spans 580 residues: Cytochrome P450 monooxygenase helB1 (580 aa).

The interval 1–32 (MRTYAIRPVSNRLPGPIEPKKHRRDRDNSTTG) is disordered. Asn-28 carries N-linked (GlcNAc...) asparagine glycosylation. A helical transmembrane segment spans residues 61 to 81 (FLNTISVLQVLAAIFIGALTY). Residue Cys-497 coordinates heme.

Belongs to the cytochrome P450 family. It depends on heme as a cofactor.

Its subcellular location is the membrane. It participates in mycotoxin biosynthesis. Its function is as follows. Cytochrome P450 monooxygenase; part of the gene cluster that mediates the biosynthesis of helvolic acid, an antibacterial nortriterpenoid. Protostadienol synthase helA cyclizes (3S)-oxidosqualene to (17Z)-protosta-17(20),24-dien-3-beta-ol (protostadienol). The synthesis of protostadienol is followed by several steps of monooxygenation, dehydrogenation, and acyl transfer to yield the final helvolic acid. Following the cyclization to the tetracyclic protostadienol by helA, cytochrome P450 monooxygenases helB1-mediated and helB2-mediated oxidation at C-4 and C-16, acyltransferase helD2-dependent acetylation of 16-OH, oxidation of C-21 by cytochrome P450 monooxygenase helB4, and short chain dehydrogenase helC-dependent oxidative decarboxylation yield the fusidane skeleton. This intermediate is further modified in three additional steps mediated by the cytochrome P450 monooxygenase helB3, the acyltransferase helD1, and the 3-ketosteroid 1-dehydrogenase helE to give helvolic acid. Compared with the late stages in the biosynthesis of helvolic acid, enzymes involved in the early stage modifications act in a relatively strict order. The hydroxylation of C-16 by helB1 and subsequent acetylation by helD2 should occur before the helB3-mediated oxidation of C-21. C-4 demethylation in fusidane-type antibiotics proceeds in an unusual manner though it is also achieved by oxidative decarboxylation. The methyl group at C-4 beta position is oxidized by helB1 and subsequently removed by the short chain dehydrogenase helC. The polypeptide is Cytochrome P450 monooxygenase helB1 (Aspergillus fumigatus (strain ATCC MYA-4609 / CBS 101355 / FGSC A1100 / Af293) (Neosartorya fumigata)).